The following is a 407-amino-acid chain: [Pyruvate dehydrogenase (acetyl-transferring)] kinase isozyme 2, mitochondrial (407 aa).

The 230-residue stretch at 135 to 364 folds into the Histidine kinase domain; sequence LEYKDTYGDD…DAVIYLKALS (230 aa). Phosphotyrosine is present on residues Tyr215 and Tyr216. ATP is bound by residues 251 to 258, Asp290, 309 to 310, and 325 to 330; these read ELFKNAMR, ST, and GFGYGL. Position 376 is an N6-succinyllysine (Lys376).

Belongs to the PDK/BCKDK protein kinase family. As to quaternary structure, homodimer, and heterodimer with PDK1. Interacts with the pyruvate dehydrogenase complex subunit DLAT, and is part of the multimeric pyruvate dehydrogenase complex that contains multiple copies of pyruvate dehydrogenase (E1), dihydrolipoamide acetyltransferase (DLAT, E2) and lipoamide dehydrogenase (DLD, E3). As to expression, detected in heart (at protein level). Highest level of expression in heart and skeletal muscle and the lowest in spleen and lung. Liver, kidney, brain and testis levels are intermediate.

Its subcellular location is the mitochondrion matrix. The enzyme catalyses L-seryl-[pyruvate dehydrogenase E1 alpha subunit] + ATP = O-phospho-L-seryl-[pyruvate dehydrogenase E1 alpha subunit] + ADP + H(+). Activity increases in response to increased acetyl-CoA and NADH levels and upon binding to the pyruvate dehydrogenase subunit DLAT. Inhibited by ADP and pyruvate; these compounds interfere with DLAT binding and thereby inhibit kinase activity. Inhibited by dichloroacetate. Inhibited by AZD7545; this compound interferes with DLAT binding and thereby inhibits kinase activity. Reactive oxygen species cause the formation of disulfide bonds, and thereby inhibit the enzyme. Functionally, kinase that plays a key role in the regulation of glucose and fatty acid metabolism and homeostasis via phosphorylation of the pyruvate dehydrogenase subunits PDHA1 and PDHA2. This inhibits pyruvate dehydrogenase activity, and thereby regulates metabolite flux through the tricarboxylic acid cycle, down-regulates aerobic respiration and inhibits the formation of acetyl-coenzyme A from pyruvate. Inhibition of pyruvate dehydrogenase decreases glucose utilization and increases fat metabolism. Mediates cellular responses to insulin. Plays an important role in maintaining normal blood glucose levels and in metabolic adaptation to nutrient availability. Via its regulation of pyruvate dehydrogenase activity, plays an important role in maintaining normal blood pH and in preventing the accumulation of ketone bodies under starvation. Plays a role in the regulation of cell proliferation and in resistance to apoptosis under oxidative stress. Plays a role in p53/TP53-mediated apoptosis. In Rattus norvegicus (Rat), this protein is [Pyruvate dehydrogenase (acetyl-transferring)] kinase isozyme 2, mitochondrial (Pdk2).